The sequence spans 162 residues: Nucleotide-binding protein A2cp1_0112 (162 aa).

It belongs to the YajQ family.

In terms of biological role, nucleotide-binding protein. In Anaeromyxobacter dehalogenans (strain 2CP-1 / ATCC BAA-258), this protein is Nucleotide-binding protein A2cp1_0112.